The sequence spans 401 residues: Imidazolonepropionase (401 aa).

Residues His-70 and His-72 each coordinate Fe(3+). Residues His-70 and His-72 each contribute to the Zn(2+) site. Residues Arg-79, Tyr-142, and His-175 each contribute to the 4-imidazolone-5-propanoate site. Tyr-142 serves as a coordination point for N-formimidoyl-L-glutamate. His-240 contributes to the Fe(3+) binding site. His-240 is a Zn(2+) binding site. Gln-243 lines the 4-imidazolone-5-propanoate pocket. Residue Asp-315 coordinates Fe(3+). Asp-315 is a binding site for Zn(2+). Residues Asn-317 and Gly-319 each coordinate N-formimidoyl-L-glutamate. Position 320 (Thr-320) interacts with 4-imidazolone-5-propanoate.

Belongs to the metallo-dependent hydrolases superfamily. HutI family. The cofactor is Zn(2+). Requires Fe(3+) as cofactor.

It localises to the cytoplasm. The enzyme catalyses 4-imidazolone-5-propanoate + H2O = N-formimidoyl-L-glutamate. It functions in the pathway amino-acid degradation; L-histidine degradation into L-glutamate; N-formimidoyl-L-glutamate from L-histidine: step 3/3. In terms of biological role, catalyzes the hydrolytic cleavage of the carbon-nitrogen bond in imidazolone-5-propanoate to yield N-formimidoyl-L-glutamate. It is the third step in the universal histidine degradation pathway. The polypeptide is Imidazolonepropionase (Caulobacter sp. (strain K31)).